A 345-amino-acid polypeptide reads, in one-letter code: Leucine zipper protein 2 (345 aa).

An N-terminal signal peptide occupies residues 1 to 19 (MKFNAAHYLLPLLPALVLS). Residues 16–211 (LVLSTRQDYE…QMKAMKETVQ (196 aa)) adopt a coiled-coil conformation. N-linked (GlcNAc...) asparagine glycosylation occurs at Asn-133. A leucine-zipper region spans residues 164–192 (LRYGKKDLLFKAQQLTELEQKLAVAKNEL). The interval 223–345 (PPLSLMPSNP…GTPAREEKLL (123 aa)) is disordered. The span at 261–277 (GHHDSSQVQATKEESRR) shows a compositional bias: basic and acidic residues. Residues 298 to 313 (PQSNSTAESELTTQKL) are compositionally biased toward polar residues. Asn-301 carries N-linked (GlcNAc...) asparagine glycosylation.

Expression found only in the brain and spinal cord.

It is found in the secreted. In Mus musculus (Mouse), this protein is Leucine zipper protein 2 (Luzp2).